A 275-amino-acid polypeptide reads, in one-letter code: NH(3)-dependent NAD(+) synthetase (275 aa).

47–54 (GISGGQDS) is an ATP binding site. Asp53 contacts Mg(2+). Arg141 contacts deamido-NAD(+). Position 161 (Thr161) interacts with ATP. Position 166 (Glu166) interacts with Mg(2+). The deamido-NAD(+) site is built by Lys174 and Asp181. 2 residues coordinate ATP: Lys190 and Thr212. Deamido-NAD(+) is bound at residue 261–262 (HK).

It belongs to the NAD synthetase family. Homodimer.

The catalysed reaction is deamido-NAD(+) + NH4(+) + ATP = AMP + diphosphate + NAD(+) + H(+). The protein operates within cofactor biosynthesis; NAD(+) biosynthesis; NAD(+) from deamido-NAD(+) (ammonia route): step 1/1. Functionally, catalyzes the ATP-dependent amidation of deamido-NAD to form NAD. Uses ammonia as a nitrogen source. The sequence is that of NH(3)-dependent NAD(+) synthetase from Enterococcus faecalis (strain ATCC 700802 / V583).